The chain runs to 183 residues: uncharacterized protein (183 aa).

The Macro domain occupies 1–182 (MFRVVHGDIT…VALKVLERDE (182 aa)).

This is an uncharacterized protein from Pyrococcus abyssi (strain GE5 / Orsay).